We begin with the raw amino-acid sequence, 720 residues long: Putative fatty acid oxidation complex trifunctional enzyme (720 aa).

Positions 1 to 384 are 3-hydroxyacyl-CoA dehydrogenase; sequence MQNEIKKVCV…SWKYGPFELL (384 aa). The enoyl-CoA hydratase/isomerase stretch occupies residues 453-720; the sequence is FVITTKMNCL…TIEKLKAIVK (268 aa).

The protein in the N-terminal section; belongs to the 3-hydroxyacyl-CoA dehydrogenase family. It in the C-terminal section; belongs to the enoyl-CoA hydratase/isomerase family.

The enzyme catalyses a (3S)-3-hydroxyacyl-CoA + NAD(+) = a 3-oxoacyl-CoA + NADH + H(+). It catalyses the reaction a (3S)-3-hydroxyacyl-CoA = a (2E)-enoyl-CoA + H2O. The catalysed reaction is a 4-saturated-(3S)-3-hydroxyacyl-CoA = a (3E)-enoyl-CoA + H2O. It carries out the reaction a (3Z)-enoyl-CoA = a 4-saturated (2E)-enoyl-CoA. The enzyme catalyses a (3E)-enoyl-CoA = a 4-saturated (2E)-enoyl-CoA. The polypeptide is Putative fatty acid oxidation complex trifunctional enzyme (Rickettsia felis (strain ATCC VR-1525 / URRWXCal2) (Rickettsia azadi)).